A 348-amino-acid chain; its full sequence is LIM domain-containing protein unc-97 (348 aa).

LIM zinc-binding domains are found at residues 21–73, 82–132, 146–196, 205–255, and 264–315; these read CVRC…CEHD, CGKC…CREC, CHKC…CLRC, CGAC…CEQH, and CFKC…CKRC.

As to quaternary structure, interacts with unc-98. Component of an integrin containing attachment complex, composed of at least pat-2, pat-3, pat-4, pat-6, unc-52, unc-97 and unc-112. Restricted to tissue types that attach to the hypodermis, specifically body wall muscles, vulval muscles, and mechanosensory neurons.

Its subcellular location is the cell junction. The protein localises to the adherens junction. It is found in the nucleus. Its function is as follows. Component of an integrin containing attachment complex, which is required for muscle development and maintenance. Probably function in adherens junction. Affects the structural integrity of the integrin containing muscle adherens junctions and contributes to the mechanosensory functions of touch neurons. In Caenorhabditis elegans, this protein is LIM domain-containing protein unc-97.